We begin with the raw amino-acid sequence, 204 residues long: Large ribosomal subunit protein eL15 (204 aa).

It belongs to the eukaryotic ribosomal protein eL15 family. As to quaternary structure, component of the large ribosomal subunit.

It is found in the cytoplasm. Functionally, component of the large ribosomal subunit. The ribosome is a large ribonucleoprotein complex responsible for the synthesis of proteins in the cell. In Silurus asotus (Amur catfish), this protein is Large ribosomal subunit protein eL15 (rpl15).